The chain runs to 1337 residues: Protein cordon-bleu (1337 aa).

Residues 1–41 are disordered; it reads MDAPRALAAKPPTGRKMKARAPPPPGKPAAQNVHSEQKLPH. 6 positions are modified to phosphoserine: serine 47, serine 50, serine 212, serine 235, serine 272, and serine 294. 2 disordered regions span residues 260–556 and 647–768; these read SKAE…NDDE and IASQ…HHGQ. Polar residues predominate over residues 288-317; that stretch reads CVTTPNSPSLHSRSLTLGPSLSLGNISGVS. Positions 323–328 match the KKRRAP 1 motif; the sequence is KKRRAP. A phosphoserine mark is found at serine 346 and serine 349. The KKRRAP 2 motif lies at 356 to 361; the sequence is KKRRAP. Residues 361–374 show a composition bias toward pro residues; it reads PAPPPPQQPPPSPV. A Phosphoserine modification is found at serine 372. The span at 377-387 shows a compositional bias: basic and acidic residues; it reads NRKEDKEENRK. Over residues 411-423 the composition is skewed to pro residues; that stretch reads LVLPPPPPYPPPD. Positions 469 to 480 are enriched in acidic residues; it reads ESEETASEDTTE. The segment covering 484–500 has biased composition (polar residues); that stretch reads VMSSPSDAISLDSQQDS. Phosphothreonine is present on threonine 522. Over residues 526–541 the composition is skewed to low complexity; it reads GPQKSPSWGKSGSGSS. Composition is skewed to polar residues over residues 647–666 and 687–710; these read IASQ…QPFV and QPTL…TSLV. Phosphoserine is present on serine 649. A compositionally biased stretch (basic and acidic residues) spans 714 to 736; sequence LIDDPKAKDKGKVHGSSHSEKTQ. At serine 816 the chain carries Phosphoserine. Disordered regions lie at residues 892-923 and 967-991; these read TPQQ…SVKV and KATT…DDAA. The residue at position 1038 (serine 1038) is a Phosphoserine. Over residues 1070–1090 the composition is skewed to polar residues; the sequence is GFNEKQTTSNQKANSTSNFSQ. Disordered stretches follow at residues 1070 to 1094, 1113 to 1133, 1145 to 1168, and 1192 to 1221; these read GFNE…ALDK, MNGS…KEST, KPSS…FGPK, and AIHS…SYVE. Position 1128 is a phosphoserine (serine 1128). WH2 domains lie at 1185-1205 and 1225-1245; these read LHSA…LRKT and ERSA…LRKV. Basic and acidic residues predominate over residues 1197–1214; it reads GGREKLRKTAEQTSEGRP. A disordered region spans residues 1262–1310; the sequence is GAPGLDKPQQEDLGLPPPPALPPPPAPAPQAPSASVTVSRFSTGTPSNS. Residues 1276–1291 show a composition bias toward pro residues; it reads LPPPPALPPPPAPAPQ. Positions 1297 to 1310 are enriched in polar residues; that stretch reads VTVSRFSTGTPSNS. Position 1303 is a phosphoserine (serine 1303). The 21-residue stretch at 1313–1333 folds into the WH2 3 domain; sequence ARQALMDAIRSGTGAARLRKV.

As to quaternary structure, identified in a complex composed of COBL, PACSIN1 and WASL. Interacts with PACSIN1, PACSIN2 and PACSIN3. Identified in a complex composed of ACTA1, COBL, GSN and TMSB4X. Interacts (via WH2 domains) with actin monomers. Interacts with DBNL. As to expression, detected in brain cortex and in the Purkinje cell layer in the cerebellum. Detected in hippocampus neurons, and at lower levels in testis, lung and spleen (at protein level). Detected in embryonic neural tube.

It is found in the cell membrane. The protein resides in the cytoplasm. It localises to the cytoskeleton. Its subcellular location is the cell projection. The protein localises to the ruffle. Plays an important role in the reorganization of the actin cytoskeleton. Binds to and sequesters actin monomers (G actin). Nucleates actin polymerization by assembling three actin monomers in cross-filament orientation and thereby promotes growth of actin filaments at the barbed end. Can also mediate actin depolymerization at barbed ends and severing of actin filaments. Promotes formation of cell ruffles. Regulates neuron morphogenesis and increases branching of axons and dendrites. Regulates dendrite branching in Purkinje cells. The protein is Protein cordon-bleu (Cobl) of Mus musculus (Mouse).